A 207-amino-acid chain; its full sequence is Outer-membrane lipoprotein LolB (207 aa).

Positions 1–21 are cleaved as a signal peptide; sequence MPIRKVSLLRLIPLASLVLAA. A lipid anchor (N-palmitoyl cysteine) is attached at Cys-22. Cys-22 carries the S-diacylglycerol cysteine lipid modification.

Belongs to the LolB family. As to quaternary structure, monomer.

It localises to the cell outer membrane. Plays a critical role in the incorporation of lipoproteins in the outer membrane after they are released by the LolA protein. The sequence is that of Outer-membrane lipoprotein LolB from Serratia proteamaculans (strain 568).